We begin with the raw amino-acid sequence, 416 residues long: UDP-N-acetylglucosamine 1-carboxyvinyltransferase (416 aa).

22–23 (KN) is a binding site for phosphoenolpyruvate. Position 92 (arginine 92) interacts with UDP-N-acetyl-alpha-D-glucosamine. Catalysis depends on cysteine 116, which acts as the Proton donor. At cysteine 116 the chain carries 2-(S-cysteinyl)pyruvic acid O-phosphothioketal. UDP-N-acetyl-alpha-D-glucosamine contacts are provided by residues 121-125 (RPVDQ), aspartate 304, and isoleucine 326.

The protein belongs to the EPSP synthase family. MurA subfamily.

It localises to the cytoplasm. It carries out the reaction phosphoenolpyruvate + UDP-N-acetyl-alpha-D-glucosamine = UDP-N-acetyl-3-O-(1-carboxyvinyl)-alpha-D-glucosamine + phosphate. Its pathway is cell wall biogenesis; peptidoglycan biosynthesis. Functionally, cell wall formation. Adds enolpyruvyl to UDP-N-acetylglucosamine. The protein is UDP-N-acetylglucosamine 1-carboxyvinyltransferase of Cupriavidus pinatubonensis (strain JMP 134 / LMG 1197) (Cupriavidus necator (strain JMP 134)).